The chain runs to 1576 residues: Pentafunctional AROM polypeptide (1576 aa).

The tract at residues 1–387 (MGSTTFENPT…YEPKASVVED (387 aa)) is 3-dehydroquinate synthase. NAD(+) is bound by residues 49–51 (DTN), 86–89 (ENSK), 117–119 (GGV), and Asp-122. Residue Arg-133 participates in 7-phospho-2-dehydro-3-deoxy-D-arabino-heptonate binding. Residue 142–143 (TT) participates in NAD(+) binding. Residues Asp-149 and Lys-155 each coordinate 7-phospho-2-dehydro-3-deoxy-D-arabino-heptonate. Lys-164 serves as a coordination point for NAD(+). Position 165 (Asn-165) interacts with 7-phospho-2-dehydro-3-deoxy-D-arabino-heptonate. NAD(+) contacts are provided by residues 182-185 (FLET) and Asn-193. Glu-197 is a binding site for Zn(2+). 7-phospho-2-dehydro-3-deoxy-D-arabino-heptonate-binding positions include 197–200 (EVVK) and Lys-253. Glu-263 (proton acceptor; for 3-dehydroquinate synthase activity) is an active-site residue. 7-phospho-2-dehydro-3-deoxy-D-arabino-heptonate-binding positions include 267 to 271 (RNILN) and His-274. His-274 is a Zn(2+) binding site. His-278 functions as the Proton acceptor; for 3-dehydroquinate synthase activity in the catalytic mechanism. Residues His-290 and Lys-359 each contribute to the 7-phospho-2-dehydro-3-deoxy-D-arabino-heptonate site. Position 290 (His-290) interacts with Zn(2+). Positions 400 to 841 (VRPSVPETLN…WDILSKSFQV (442 aa)) are EPSP synthase. Residue Cys-823 is the For EPSP synthase activity of the active site. A shikimate kinase region spans residues 863 to 1055 (DKSIFIIGMR…RNKPQSFFVS (193 aa)). Position 870-877 (870-877 (GMRGAGKT)) interacts with ATP. A 3-dehydroquinase region spans residues 1056 to 1276 (LTMPDISGAA…AAPGQLSAAE (221 aa)). His-1179 functions as the Proton acceptor; for 3-dehydroquinate dehydratase activity in the catalytic mechanism. Lys-1207 functions as the Schiff-base intermediate with substrate; for 3-dehydroquinate dehydratase activity in the catalytic mechanism. Residues 1289–1576 (PKSFYLFGTP…RAAVMGDSTA (288 aa)) are shikimate dehydrogenase.

The protein in the N-terminal section; belongs to the sugar phosphate cyclases superfamily. Dehydroquinate synthase family. This sequence in the 2nd section; belongs to the EPSP synthase family. In the 3rd section; belongs to the shikimate kinase family. It in the 4th section; belongs to the type-I 3-dehydroquinase family. The protein in the C-terminal section; belongs to the shikimate dehydrogenase family. In terms of assembly, homodimer. Zn(2+) is required as a cofactor.

The protein resides in the cytoplasm. The enzyme catalyses 7-phospho-2-dehydro-3-deoxy-D-arabino-heptonate = 3-dehydroquinate + phosphate. The catalysed reaction is 3-dehydroquinate = 3-dehydroshikimate + H2O. It catalyses the reaction shikimate + NADP(+) = 3-dehydroshikimate + NADPH + H(+). It carries out the reaction shikimate + ATP = 3-phosphoshikimate + ADP + H(+). The enzyme catalyses 3-phosphoshikimate + phosphoenolpyruvate = 5-O-(1-carboxyvinyl)-3-phosphoshikimate + phosphate. It participates in metabolic intermediate biosynthesis; chorismate biosynthesis; chorismate from D-erythrose 4-phosphate and phosphoenolpyruvate: step 2/7. The protein operates within metabolic intermediate biosynthesis; chorismate biosynthesis; chorismate from D-erythrose 4-phosphate and phosphoenolpyruvate: step 3/7. It functions in the pathway metabolic intermediate biosynthesis; chorismate biosynthesis; chorismate from D-erythrose 4-phosphate and phosphoenolpyruvate: step 4/7. Its pathway is metabolic intermediate biosynthesis; chorismate biosynthesis; chorismate from D-erythrose 4-phosphate and phosphoenolpyruvate: step 5/7. It participates in metabolic intermediate biosynthesis; chorismate biosynthesis; chorismate from D-erythrose 4-phosphate and phosphoenolpyruvate: step 6/7. Its function is as follows. The AROM polypeptide catalyzes 5 consecutive enzymatic reactions in prechorismate polyaromatic amino acid biosynthesis. In Sclerotinia sclerotiorum (strain ATCC 18683 / 1980 / Ss-1) (White mold), this protein is Pentafunctional AROM polypeptide.